The following is a 641-amino-acid chain: Serine/threonine-protein kinase pink-1, mitochondrial (641 aa).

Residues 1–74 constitute a mitochondrion transit peptide; it reads MSMKRFGKAA…TRHGRVFRPF (74 aa). Positions 137–483 constitute a Protein kinase domain; that stretch reads YEFGEFLGQG…AANALNLSLF (347 aa). ATP contacts are provided by residues 143–151 and lysine 199; that span reads LGQGCNAAV. Catalysis depends on aspartate 338, which acts as the Proton acceptor.

Belongs to the protein kinase superfamily. Ser/Thr protein kinase family. Mg(2+) is required as a cofactor. In terms of processing, autophosphorylated.

It is found in the mitochondrion. It carries out the reaction L-seryl-[protein] + ATP = O-phospho-L-seryl-[protein] + ADP + H(+). The catalysed reaction is L-threonyl-[protein] + ATP = O-phospho-L-threonyl-[protein] + ADP + H(+). Its function is as follows. Protects against mitochondrial dysfunction during cellular stress, potentially by phosphorylating mitochondrial proteins. Plays a role in mitophagy. In Caenorhabditis elegans, this protein is Serine/threonine-protein kinase pink-1, mitochondrial (pink-1).